The sequence spans 294 residues: UDP-3-O-acyl-N-acetylglucosamine deacetylase (294 aa).

Zn(2+) is bound by residues H75, H232, and D236. Residue H259 is the Proton donor of the active site.

This sequence belongs to the LpxC family. The cofactor is Zn(2+).

The catalysed reaction is a UDP-3-O-[(3R)-3-hydroxyacyl]-N-acetyl-alpha-D-glucosamine + H2O = a UDP-3-O-[(3R)-3-hydroxyacyl]-alpha-D-glucosamine + acetate. The protein operates within glycolipid biosynthesis; lipid IV(A) biosynthesis; lipid IV(A) from (3R)-3-hydroxytetradecanoyl-[acyl-carrier-protein] and UDP-N-acetyl-alpha-D-glucosamine: step 2/6. Its function is as follows. Catalyzes the hydrolysis of UDP-3-O-myristoyl-N-acetylglucosamine to form UDP-3-O-myristoylglucosamine and acetate, the committed step in lipid A biosynthesis. The protein is UDP-3-O-acyl-N-acetylglucosamine deacetylase of Campylobacter concisus (strain 13826).